The following is a 287-amino-acid chain: Large ribosomal subunit protein uL2 (287 aa).

Residues 214–287 (LGRRPEVRGS…SKRGRGGRDA (74 aa)) are disordered. The segment covering 271-287 (QRRRRKSSKRGRGGRDA) has biased composition (basic residues).

This sequence belongs to the universal ribosomal protein uL2 family. As to quaternary structure, part of the 50S ribosomal subunit. Forms a bridge to the 30S subunit in the 70S ribosome.

One of the primary rRNA binding proteins. Required for association of the 30S and 50S subunits to form the 70S ribosome, for tRNA binding and peptide bond formation. It has been suggested to have peptidyltransferase activity; this is somewhat controversial. Makes several contacts with the 16S rRNA in the 70S ribosome. The sequence is that of Large ribosomal subunit protein uL2 from Synechococcus elongatus (strain ATCC 33912 / PCC 7942 / FACHB-805) (Anacystis nidulans R2).